The sequence spans 354 residues: Putative Xaa-Pro aminopeptidase (354 aa).

Aspartate 213, aspartate 224, histidine 290, glutamate 319, and glutamate 333 together coordinate Mn(2+).

It belongs to the peptidase M24B family. Requires Mn(2+) as cofactor.

The enzyme catalyses Release of any N-terminal amino acid, including proline, that is linked to proline, even from a dipeptide or tripeptide.. The polypeptide is Putative Xaa-Pro aminopeptidase (pepP) (Mycoplasma genitalium (strain ATCC 33530 / DSM 19775 / NCTC 10195 / G37) (Mycoplasmoides genitalium)).